A 442-amino-acid chain; its full sequence is Aspartate--tRNA(Asp/Asn) ligase (442 aa).

Glu-172 is an L-aspartate binding site. The tract at residues 194–197 (QFYK) is aspartate. Arg-216 is a binding site for L-aspartate. Residues 216 to 218 (RAE), 224 to 226 (RHL), and Glu-365 each bind ATP. Positions 365 and 368 each coordinate Mg(2+). Positions 368 and 372 each coordinate L-aspartate. ATP is bound at residue 413–416 (GLER).

Belongs to the class-II aminoacyl-tRNA synthetase family. Type 2 subfamily. As to quaternary structure, homodimer. It depends on Mg(2+) as a cofactor.

It is found in the cytoplasm. The enzyme catalyses tRNA(Asx) + L-aspartate + ATP = L-aspartyl-tRNA(Asx) + AMP + diphosphate. Aspartyl-tRNA synthetase with relaxed tRNA specificity since it is able to aspartylate not only its cognate tRNA(Asp) but also tRNA(Asn). Reaction proceeds in two steps: L-aspartate is first activated by ATP to form Asp-AMP and then transferred to the acceptor end of tRNA(Asp/Asn). The protein is Aspartate--tRNA(Asp/Asn) ligase (aspS) of Aeropyrum pernix (strain ATCC 700893 / DSM 11879 / JCM 9820 / NBRC 100138 / K1).